The chain runs to 87 residues: Histone H1.C6/H1.C9 (87 aa).

The segment at 1–87 (MSDAAVPPKK…KKAVKKAPKK (87 aa)) is disordered. Positions 11–87 (ASPKKASPKK…KKAVKKAPKK (77 aa)) are enriched in basic residues.

It localises to the nucleus. The protein localises to the chromosome. This is Histone H1.C6/H1.C9 from Trypanosoma cruzi.